We begin with the raw amino-acid sequence, 123 residues long: MLGLEGPCWVGPGPDGGLAVSEEFGDVRLFGSARQPLGSLGGWTGHTFGCPAGICSNSEGNVIVADEQRRQVTLFPRAGPPICLVSEGLGQPLGVACAPQGQLLVADAKDNSIKVYQGLKELA.

NHL repeat units lie at residues 35 to 78 and 79 to 119; these read QPLG…FPRA and GPPI…YQGL.

In Homo sapiens (Human), this protein is NHL-repeat-containing protein 4 (NHLRC4).